The chain runs to 286 residues: uncharacterized protein (286 aa).

Residues 1–146 (MSRYKKDNDG…KPVDVERGDF (146 aa)) form the Integrase catalytic domain. Positions 252–263 (RKVKAKKGKKDK) are enriched in basic residues. The interval 252-286 (RKVKAKKGKKDKKLKESKKSDDTSTGASTGSSIAM) is disordered. Basic and acidic residues predominate over residues 264 to 273 (KLKESKKSDD). Residues 274 to 286 (TSTGASTGSSIAM) show a composition bias toward low complexity.

This is an uncharacterized protein from Caenorhabditis elegans.